We begin with the raw amino-acid sequence, 195 residues long: NADH-ubiquinone oxidoreductase subunit 9 (195 aa).

This sequence belongs to the complex I 30 kDa subunit family. Complex I is composed of about 30 different subunits.

It localises to the mitochondrion inner membrane. The catalysed reaction is a ubiquinone + NADH + 5 H(+)(in) = a ubiquinol + NAD(+) + 4 H(+)(out). Its function is as follows. Core subunit of the mitochondrial membrane respiratory chain NADH dehydrogenase (Complex I) that is believed to belong to the minimal assembly required for catalysis. Complex I functions in the transfer of electrons from NADH to the respiratory chain. The immediate electron acceptor for the enzyme is believed to be ubiquinone. The chain is NADH-ubiquinone oxidoreductase subunit 9 (NAD9) from Acanthamoeba castellanii (Amoeba).